A 197-amino-acid polypeptide reads, in one-letter code: Pyridoxal 5'-phosphate synthase subunit PdxT (197 aa).

Residue 53–55 (GES) coordinates L-glutamine. Catalysis depends on cysteine 85, which acts as the Nucleophile. Residues arginine 114 and 142–143 (IR) each bind L-glutamine. Catalysis depends on charge relay system residues histidine 179 and glutamate 181.

This sequence belongs to the glutaminase PdxT/SNO family. In the presence of PdxS, forms a dodecamer of heterodimers. Only shows activity in the heterodimer.

It catalyses the reaction aldehydo-D-ribose 5-phosphate + D-glyceraldehyde 3-phosphate + L-glutamine = pyridoxal 5'-phosphate + L-glutamate + phosphate + 3 H2O + H(+). The enzyme catalyses L-glutamine + H2O = L-glutamate + NH4(+). It functions in the pathway cofactor biosynthesis; pyridoxal 5'-phosphate biosynthesis. In terms of biological role, catalyzes the hydrolysis of glutamine to glutamate and ammonia as part of the biosynthesis of pyridoxal 5'-phosphate. The resulting ammonia molecule is channeled to the active site of PdxS. In Thermococcus kodakarensis (strain ATCC BAA-918 / JCM 12380 / KOD1) (Pyrococcus kodakaraensis (strain KOD1)), this protein is Pyridoxal 5'-phosphate synthase subunit PdxT.